The primary structure comprises 627 residues: Protein zyg-11 homolog A (627 aa).

3 LRR repeats span residues 123–146 (LPNL…LSCK), 203–227 (LPNL…SFLQ), and 409–432 (ITSI…LIMA).

The protein belongs to the zyg-11 family.

Its function is as follows. Probably acts as a target recruitment subunit in an E3 ubiquitin ligase complex ZYGA-CUL2-elongin BC. This Mus musculus (Mouse) protein is Protein zyg-11 homolog A (Zyg11a).